The primary structure comprises 236 residues: Methylosome subunit pICln (236 aa).

N-acetylserine is present on Ser2. Residues Ser95, Ser143, Ser192, Ser194, Ser197, and Ser209 each carry the phosphoserine modification. The tract at residues 134-158 (LHPDPEDEDSDDYDGEEYDVEAHEQ) is disordered. The segment covering 138–152 (PEDEDSDDYDGEEYD) has biased composition (acidic residues). Thr222 carries the phosphothreonine modification.

The protein belongs to the pICln (TC 1.A.47) family. Component of the methylosome, a 20S complex containing at least PRMT5/SKB1, WDR77/MEP50 and CLNS1A/pICln. May mediate SNRPD1 and SNRPD3 methylation. Forms a 6S pICln-Sm complex composed of CLNS1A/pICln, SNRPD1, SNRPD2, SNRPE, SNRPF and SNRPG; ring-like structure where CLNS1A/pICln mimics additional Sm proteins and which is unable to assemble into the core snRNP. Interacts with LSM10 and LSM11. Expressed in most tissues.

The protein localises to the cytoplasm. The protein resides in the cytosol. It is found in the nucleus. It localises to the cytoskeleton. Functionally, involved in both the assembly of spliceosomal snRNPs and the methylation of Sm proteins. Chaperone that regulates the assembly of spliceosomal U1, U2, U4 and U5 small nuclear ribonucleoproteins (snRNPs), the building blocks of the spliceosome, and thereby plays an important role in the splicing of cellular pre-mRNAs. Most spliceosomal snRNPs contain a common set of Sm proteins SNRPB, SNRPD1, SNRPD2, SNRPD3, SNRPE, SNRPF and SNRPG that assemble in a heptameric protein ring on the Sm site of the small nuclear RNA to form the core snRNP (Sm core). In the cytosol, the Sm proteins SNRPD1, SNRPD2, SNRPE, SNRPF and SNRPG are trapped in an inactive 6S pICln-Sm complex by the chaperone CLNS1A that controls the assembly of the core snRNP. Dissociation by the SMN complex of CLNS1A from the trapped Sm proteins and their transfer to an SMN-Sm complex triggers the assembly of core snRNPs and their transport to the nucleus. This is Methylosome subunit pICln (Clns1a) from Rattus norvegicus (Rat).